Consider the following 96-residue polypeptide: Protein Vpr (96 aa).

Residues 1 to 42 (MEQAPEDQGPQREPYNEWTLELLEELKSEAVRHFPRIWLHSL) form a homooligomerization region. Phosphoserine; by host occurs at positions 79, 94, and 96.

It belongs to the HIV-1 VPR protein family. As to quaternary structure, homooligomer, may form homodimer. Interacts with p6-gag region of the Pr55 Gag precursor protein through a (Leu-X-X)4 motif near the C-terminus of the P6gag protein. Interacts with host UNG. May interact with host RAD23A/HHR23A. Interacts with host VPRBP/DCAF1, leading to hijack the CUL4A-RBX1-DDB1-DCAF1/VPRBP complex, mediating ubiquitination of host proteins such as TERT and ZGPAT and arrest of the cell cycle in G2 phase. Phosphorylated on several residues by host. These phosphorylations regulate VPR activity for the nuclear import of the HIV-1 pre-integration complex.

Its subcellular location is the virion. It localises to the host nucleus. It is found in the host extracellular space. Its function is as follows. During virus replication, may deplete host UNG protein, and incude G2-M cell cycle arrest. Acts by targeting specific host proteins for degradation by the 26S proteasome, through association with the cellular CUL4A-DDB1 E3 ligase complex by direct interaction with host VPRPB/DCAF-1. Cell cycle arrest reportedly occurs within hours of infection and is not blocked by antiviral agents, suggesting that it is initiated by the VPR carried into the virion. Additionally, VPR induces apoptosis in a cell cycle dependent manner suggesting that these two effects are mechanistically linked. Detected in the serum and cerebrospinal fluid of AIDS patient, VPR may also induce cell death to bystander cells. During virus entry, plays a role in the transport of the viral pre-integration (PIC) complex to the host nucleus. This function is crucial for viral infection of non-dividing macrophages. May act directly at the nuclear pore complex, by binding nucleoporins phenylalanine-glycine (FG)-repeat regions. This is Protein Vpr from Homo sapiens (Human).